The sequence spans 350 residues: Phosphoribosylformylglycinamidine cyclo-ligase (350 aa).

This sequence belongs to the AIR synthase family.

The protein localises to the cytoplasm. It carries out the reaction 2-formamido-N(1)-(5-O-phospho-beta-D-ribosyl)acetamidine + ATP = 5-amino-1-(5-phospho-beta-D-ribosyl)imidazole + ADP + phosphate + H(+). Its pathway is purine metabolism; IMP biosynthesis via de novo pathway; 5-amino-1-(5-phospho-D-ribosyl)imidazole from N(2)-formyl-N(1)-(5-phospho-D-ribosyl)glycinamide: step 2/2. The polypeptide is Phosphoribosylformylglycinamidine cyclo-ligase (Cupriavidus pinatubonensis (strain JMP 134 / LMG 1197) (Cupriavidus necator (strain JMP 134))).